The primary structure comprises 203 residues: Recombination protein RecR (203 aa).

The C4-type zinc finger occupies 56–71 (CAVCGNVSDEERCRIC). The 101-residue stretch at 79 to 179 (SLICVVEEPK…TVTRIASGLP (101 aa)) folds into the Toprim domain.

The protein belongs to the RecR family.

Functionally, may play a role in DNA repair. It seems to be involved in an RecBC-independent recombinational process of DNA repair. It may act with RecF and RecO. In Mycolicibacterium vanbaalenii (strain DSM 7251 / JCM 13017 / BCRC 16820 / KCTC 9966 / NRRL B-24157 / PYR-1) (Mycobacterium vanbaalenii), this protein is Recombination protein RecR.